Here is a 482-residue protein sequence, read N- to C-terminus: Glutamate--tRNA ligase (482 aa).

Positions 9–19 (PSPTGPIHVGN) match the 'HIGH' region motif. Zn(2+) contacts are provided by cysteine 106, cysteine 108, cysteine 133, and aspartate 135. Residues 250-254 (KLSKR) carry the 'KMSKS' region motif. Lysine 253 is a binding site for ATP.

This sequence belongs to the class-I aminoacyl-tRNA synthetase family. Glutamate--tRNA ligase type 1 subfamily. In terms of assembly, monomer. Zn(2+) serves as cofactor.

It localises to the cytoplasm. It catalyses the reaction tRNA(Glu) + L-glutamate + ATP = L-glutamyl-tRNA(Glu) + AMP + diphosphate. Catalyzes the attachment of glutamate to tRNA(Glu) in a two-step reaction: glutamate is first activated by ATP to form Glu-AMP and then transferred to the acceptor end of tRNA(Glu). In Symbiobacterium thermophilum (strain DSM 24528 / JCM 14929 / IAM 14863 / T), this protein is Glutamate--tRNA ligase.